An 82-amino-acid chain; its full sequence is Omega-ctenitoxin-Pn1a (82 aa).

The signal sequence occupies residues Met1 to Ala21. Residues Glu22–Arg37 constitute a propeptide that is removed on maturation. 4 cysteine pairs are disulfide-bonded: Cys39-Cys54, Cys46-Cys59, Cys53-Cys70, and Cys61-Cys68. A propeptide spanning residues Lys72–Lys82 is cleaved from the precursor.

Belongs to the neurotoxin 02 (plectoxin) family. In terms of tissue distribution, expressed by the venom gland.

Its subcellular location is the secreted. In terms of biological role, antagonist of L-type calcium channels (Cav1/CACNA1). Induces immediate clockwise gyration and flaccid paralysis after 6 hours at dose levels of 5 ug per mouse. The protein is Omega-ctenitoxin-Pn1a of Phoneutria nigriventer (Brazilian armed spider).